The chain runs to 384 residues: Prokineticin receptor 2 (384 aa).

Topologically, residues 1–54 are extracellular; it reads MAAQNGNTSFTPNFNPPQDHASSLSFNFSYGDYDLPMDEDEDMTKTRTFFAAKI. Residues Asn-7 and Asn-27 are each glycosylated (N-linked (GlcNAc...) asparagine). A helical membrane pass occupies residues 55-75; sequence VIGIALAGIMLVCGIGNFVFI. Over 76–89 the chain is Cytoplasmic; that stretch reads AALTRYKKLRNLTN. The helical transmembrane segment at 90–110 threads the bilayer; it reads LLIANLAISDFLVAIICCPFE. The Extracellular portion of the chain corresponds to 111-136; that stretch reads MDYYVVRQLSWEHGHVLCASVNYLRT. Cys-128 and Cys-208 are joined by a disulfide. Residues 137–157 traverse the membrane as a helical segment; the sequence is VSLYVSTNALLAIAIDRYLAI. Residues 158–171 lie on the Cytoplasmic side of the membrane; sequence VHPLKPRMNYQTAS. A helical transmembrane segment spans residues 172 to 192; that stretch reads FLIALVWMVSILIAIPSAYFA. The Extracellular portion of the chain corresponds to 193-223; sequence TETVLFIVKSQEKIFCGQIWPVDQQLYYKSY. A helical transmembrane segment spans residues 224–244; it reads FLFIFGVEFVGPVVTMTLCYA. At 245 to 273 the chain is on the cytoplasmic side; the sequence is RISRELWFKAVPGFQTEQIRKRLRCRRKT. A helical membrane pass occupies residues 274-294; the sequence is VLVLMCILTAYVLCWAPFYGF. Topologically, residues 295-313 are extracellular; that stretch reads TIVRDFFPTVFVKEKHYLT. The chain crosses the membrane as a helical span at residues 314 to 334; sequence AFYVVECIAMSNSMINTVCFV. Topologically, residues 335–384 are cytoplasmic; the sequence is TVKNNTMKYFKKMMLLHWRPSQRGSKSSADLDLRTNGVPTTEEVDCIRLK.

This sequence belongs to the G-protein coupled receptor 1 family. As to quaternary structure, homodimer. As to expression, expressed in the ileocecum, thyroid gland, pituitary gland, salivary gland, adrenal gland, testis, ovary and brain.

It localises to the cell membrane. Receptor for prokineticin 2. Exclusively coupled to the G(q) subclass of heteromeric G proteins. Activation leads to mobilization of calcium, stimulation of phosphoinositide turnover and activation of p44/p42 mitogen-activated protein kinase. This Homo sapiens (Human) protein is Prokineticin receptor 2 (PROKR2).